A 637-amino-acid chain; its full sequence is Putative pentatricopeptide repeat-containing protein At5g65820 (637 aa).

PPR repeat units follow at residues 146-180, 182-216, 217-247, 251-285, 286-320, 321-355, 356-390, 391-425, 426-460, 461-495, 498-532, and 534-568; these read SIEV…NPQL, EPEL…GFEP, DEYV…MRMR, NLRY…GFEP, DIVD…GFEP, NANC…ECEA, DVVT…GLMP, SELT…EYHP, DIGI…GLSP, GVDT…GLFS, QYGT…GACE, and NVLS…DFMP. The span at 616-630 shows a compositional bias: basic and acidic residues; that stretch reads QDLTEKAKSKQDREG. The segment at 616 to 637 is disordered; sequence QDLTEKAKSKQDREGKKKQRSR.

Belongs to the PPR family. P subfamily.

The sequence is that of Putative pentatricopeptide repeat-containing protein At5g65820 from Arabidopsis thaliana (Mouse-ear cress).